The following is a 323-amino-acid chain: tRNA U34 carboxymethyltransferase (323 aa).

Carboxy-S-adenosyl-L-methionine contacts are provided by residues K91, W105, K110, G130, D152 to T154, I181 to E182, M196, Y200, and R315.

Belongs to the class I-like SAM-binding methyltransferase superfamily. CmoB family. In terms of assembly, homotetramer.

It catalyses the reaction carboxy-S-adenosyl-L-methionine + 5-hydroxyuridine(34) in tRNA = 5-carboxymethoxyuridine(34) in tRNA + S-adenosyl-L-homocysteine + H(+). Its function is as follows. Catalyzes carboxymethyl transfer from carboxy-S-adenosyl-L-methionine (Cx-SAM) to 5-hydroxyuridine (ho5U) to form 5-carboxymethoxyuridine (cmo5U) at position 34 in tRNAs. This Shigella flexneri protein is tRNA U34 carboxymethyltransferase.